The chain runs to 737 residues: Acetylcholinesterase (737 aa).

A signal peptide spans 1 to 38 (MEIRGLLMGRLRLGRRMVPLGLLGVTALLLILPPFALV). The interval 141–168 (HSGATPRRRGLTRRESNSDANDNDPLVV) is disordered. Asparagine 220 carries N-linked (GlcNAc...) asparagine glycosylation. Cysteine 228 and cysteine 255 form a disulfide bridge. Serine 360 acts as the Acyl-ester intermediate in catalysis. Cysteines 414 and 427 form a disulfide. Active-site charge relay system residues include glutamate 486 and histidine 600. A disulfide bridge links cysteine 562 with cysteine 683. N-linked (GlcNAc...) asparagine glycosylation is present at asparagine 670.

Belongs to the type-B carboxylesterase/lipase family.

It localises to the synapse. It carries out the reaction acetylcholine + H2O = choline + acetate + H(+). Functionally, rapidly hydrolyzes choline released into the synapse. This is Acetylcholinesterase (Ace) from Anopheles gambiae (African malaria mosquito).